A 336-amino-acid polypeptide reads, in one-letter code: Cinnamoyl-CoA reductase 2 (336 aa).

NADP(+)-binding positions include 21–27, arginine 46, lysine 52, 72–73, 92–94, tyrosine 165, lysine 169, 192–195, and serine 207; these read GAGGFIA, DL, TAS, and PVVV. A disulfide bridge links cysteine 158 with cysteine 166. The active-site Proton donor is lysine 169.

It belongs to the NAD(P)-dependent epimerase/dehydratase family. Dihydroflavonol-4-reductase subfamily. Post-translationally, the formation of a reversible disulfide bond reduces activity by perturbing the positioning of nearby catalytic residues. As to expression, mainly expressed in roots and stems, especially at the second internode and, to a lower extent, in leaves and flowers. Localized in vascular elements, with weaker expression in the interfascicular (xylem fiber) region.

The protein resides in the cytoplasm. It catalyses the reaction (E)-coniferaldehyde + NADP(+) + CoA = (E)-feruloyl-CoA + NADPH + H(+). It carries out the reaction (E)-4-coumaraldehyde + NADP(+) + CoA = (E)-4-coumaroyl-CoA + NADPH + H(+). The enzyme catalyses (E)-sinapaldehyde + NADP(+) + CoA = (E)-sinapoyl-CoA + NADPH + H(+). The catalysed reaction is (E)-cinnamaldehyde + NADP(+) + CoA = (E)-cinnamoyl-CoA + NADPH + H(+). It catalyses the reaction (E)-caffeyl aldehyde + NADP(+) + CoA = (E)-caffeoyl-CoA + NADPH + H(+). Its pathway is aromatic compound metabolism; phenylpropanoid biosynthesis. Its function is as follows. Involved in the latter stages of lignin biosynthesis. Catalyzes one of the last steps of monolignol biosynthesis, the conversion of cinnamoyl-CoAs into their corresponding cinnamaldehydes. Mediates the conversion of caffeoyl-CoA and coumaroyl-CoA to caffaldehyde and coumaraldehyde, respectively. Also active, with a lower efficiency, toward feruloyl-CoA and sinapoyl-CoA. Involved in the production of floral volatile phenylpropanoids in flowers of fragrant cultivars from cinnamic acid, a common precursor with the anthocyanin biosynthesis pathway involved in flower pigmentation. The sequence is that of Cinnamoyl-CoA reductase 2 from Medicago truncatula (Barrel medic).